Here is a 372-residue protein sequence, read N- to C-terminus: Protein-glutamate methylesterase/protein-glutamine glutaminase 1 (372 aa).

A Response regulatory domain is found at 4–121; the sequence is KVLVVDDSSF…ATNKDDAILL (118 aa). Asp-55 carries the post-translational modification 4-aspartylphosphate. The tract at residues 138–174 is disordered; that stretch reads VVRPTTPTPPPRSSASSVLGGVSTHTQPAPVRSSHAA. In terms of domain architecture, CheB-type methylesterase spans 179–372; the sequence is SGKQYKLLLI…ESILKESARG (194 aa). Active-site residues include Ser-191, His-218, and Asp-314.

It belongs to the CheB family. In terms of processing, phosphorylated by CheA. Phosphorylation of the N-terminal regulatory domain activates the methylesterase activity.

It localises to the cytoplasm. The enzyme catalyses [protein]-L-glutamate 5-O-methyl ester + H2O = L-glutamyl-[protein] + methanol + H(+). The catalysed reaction is L-glutaminyl-[protein] + H2O = L-glutamyl-[protein] + NH4(+). Functionally, involved in chemotaxis. Part of a chemotaxis signal transduction system that modulates chemotaxis in response to various stimuli. Catalyzes the demethylation of specific methylglutamate residues introduced into the chemoreceptors (methyl-accepting chemotaxis proteins or MCP) by CheR. Also mediates the irreversible deamidation of specific glutamine residues to glutamic acid. The sequence is that of Protein-glutamate methylesterase/protein-glutamine glutaminase 1 from Shewanella sp. (strain MR-4).